The chain runs to 110 residues: Nitrogenase-stabilizing/protective protein NifW (110 aa).

Belongs to the NifW family. As to quaternary structure, homotrimer; associates with NifD.

May protect the nitrogenase Fe-Mo protein from oxidative damage. This is Nitrogenase-stabilizing/protective protein NifW from Acidithiobacillus ferrooxidans (strain ATCC 23270 / DSM 14882 / CIP 104768 / NCIMB 8455) (Ferrobacillus ferrooxidans (strain ATCC 23270)).